Consider the following 68-residue polypeptide: Phylloseptin-SP1 (68 aa).

The signal sequence occupies residues 1 to 22 (MAFLKKSLFLVLFLGLVSLSIC). A propeptide spanning residues 23 to 45 (EEKERETKEEENEQEDDNREEKR) is cleaved from the precursor. At leucine 67 the chain carries Leucine amide.

As to expression, expressed by the skin glands.

The protein resides in the secreted. Functionally, weak cationic amphipathic alpha-helical antimicrobial peptide with weak activity against Gram-positive and Gram-negative bacteria and fungi. Has been tested against E.coli (MIC&gt;217.69 uM), S.aureus (MIC&gt;217.69 uM), K.pneumoniae (MIC&gt;189.00 uM) and C.albicans (MIC&gt;217.69 uM). Shows a moderate hemolytic activity. This is Phylloseptin-SP1 from Agalychnis spurrelli (Gliding leaf frog).